A 465-amino-acid polypeptide reads, in one-letter code: Ribulose bisphosphate carboxylase large chain (465 aa).

Lys4 is modified (N6,N6,N6-trimethyllysine). 2 residues coordinate substrate: Asn113 and Thr163. The active-site Proton acceptor is the Lys165. Residue Lys167 participates in substrate binding. Lys191, Asp193, and Glu194 together coordinate Mg(2+). Lys191 is modified (N6-carboxylysine). His284 functions as the Proton acceptor in the catalytic mechanism. 3 residues coordinate substrate: Arg285, His317, and Ser369.

Belongs to the RuBisCO large chain family. Type I subfamily. Heterohexadecamer of 8 large chains and 8 small chains; disulfide-linked. The disulfide link is formed within the large subunit homodimers. Requires Mg(2+) as cofactor. Post-translationally, the disulfide bond which can form in the large chain dimeric partners within the hexadecamer appears to be associated with oxidative stress and protein turnover.

The protein resides in the plastid. The protein localises to the chloroplast. The catalysed reaction is 2 (2R)-3-phosphoglycerate + 2 H(+) = D-ribulose 1,5-bisphosphate + CO2 + H2O. It catalyses the reaction D-ribulose 1,5-bisphosphate + O2 = 2-phosphoglycolate + (2R)-3-phosphoglycerate + 2 H(+). Its function is as follows. RuBisCO catalyzes two reactions: the carboxylation of D-ribulose 1,5-bisphosphate, the primary event in carbon dioxide fixation, as well as the oxidative fragmentation of the pentose substrate in the photorespiration process. Both reactions occur simultaneously and in competition at the same active site. The sequence is that of Ribulose bisphosphate carboxylase large chain from Dillenia indica (Elephant apple).